The chain runs to 266 residues: Signal peptidase I (266 aa).

Topologically, residues 1-20 are cytoplasmic; it reads MQTDNTKSNTNKTAKQEWWS. The chain crosses the membrane as a helical span at residues 21-41; it reads CAFVICIALLIRILIMEPFTV. Over 42 to 266 the chain is Periplasmic; that stretch reads PTGSMKATIL…IFRNLYNTDE (225 aa). Catalysis depends on residues Ser45 and Lys108.

This sequence belongs to the peptidase S26 family.

The protein localises to the cell inner membrane. The enzyme catalyses Cleavage of hydrophobic, N-terminal signal or leader sequences from secreted and periplasmic proteins.. The protein is Signal peptidase I (lepB) of Rickettsia akari (strain Hartford).